The sequence spans 341 residues: UPF0283 membrane protein VV2076 (341 aa).

Transmembrane regions (helical) follow at residues 64-84 (LAGG…VDSV), 93-113 (WLTL…LGAM), 207-227 (ESAA…LVAW), and 255-275 (LVLA…AGMD).

The protein belongs to the UPF0283 family.

The protein resides in the cell inner membrane. This Vibrio vulnificus (strain YJ016) protein is UPF0283 membrane protein VV2076.